We begin with the raw amino-acid sequence, 156 residues long: Small ribosomal subunit protein uS7 (156 aa).

Belongs to the universal ribosomal protein uS7 family. Part of the 30S ribosomal subunit. Contacts proteins S9 and S11.

One of the primary rRNA binding proteins, it binds directly to 16S rRNA where it nucleates assembly of the head domain of the 30S subunit. Is located at the subunit interface close to the decoding center, probably blocks exit of the E-site tRNA. In Symbiobacterium thermophilum (strain DSM 24528 / JCM 14929 / IAM 14863 / T), this protein is Small ribosomal subunit protein uS7.